The following is a 92-amino-acid chain: Alpha-conotoxin-like Mi20.1 (92 aa).

The first 24 residues, 1–24, serve as a signal peptide directing secretion; that stretch reads MPKLEMMLLVLLILPLSSFSAAGE. Positions 25–45 are excised as a propeptide; sequence QVVQGDRRSDGLARYLQRGGR. E49 is subject to 4-carboxyglutamate. P55 is modified (4-hydroxyproline). 4 disulfide bridges follow: C63–C72, C68–C80, C73–C90, and C78–C92.

This sequence belongs to the conotoxin D superfamily. In terms of assembly, hetero-, homo- or pseudo-homodimer (identical sequence, different post-translational modifications). One pseudo-homodimer of [carboxyGlu-49, hydroxyPro-55]Ml20.1 and [carboxyGlu-49, hydroxyPro-55, hydroxyPro-70]Ml20.1 may exist. In terms of tissue distribution, expressed by the venom duct.

The protein resides in the secreted. In terms of biological role, alpha-conotoxins act on postsynaptic membranes, they bind to the nicotinic acetylcholine receptors (nAChR) and thus inhibit them. Through its two C-terminal domains, this homodimeric protein would bind to two nAChR allosteric sites, located outside the nAChR C-loop of the principal binding face and at the adjacent binding interface in a clockwise direction. This toxin specifically blocks mammalian neuronal nAChR of the alpha-7/CHRNA7, alpha-3-beta-2/CHRNA3-CHRNB2 and alpha-4-beta-2/CHRNA4-CHRNB2 subtypes. The chain is Alpha-conotoxin-like Mi20.1 from Conus miles (Soldier cone).